Consider the following 869-residue polypeptide: Probable beta-glucosidase F (869 aa).

The N-terminal stretch at 1–19 (MRVLSAIALVASLASSALS) is a signal peptide. 2 N-linked (GlcNAc...) asparagine glycosylation sites follow: N77 and N261. D289 is a catalytic residue. Residues N332, N364, N399, and N478 are each glycosylated (N-linked (GlcNAc...) asparagine). The interval 677–697 (STYPPTRPPKGPTPTYPTAIP) is disordered. Positions 681 to 691 (PTRPPKGPTPT) are enriched in pro residues. An N-linked (GlcNAc...) asparagine glycan is attached at N728.

The protein belongs to the glycosyl hydrolase 3 family.

The protein localises to the secreted. The catalysed reaction is Hydrolysis of terminal, non-reducing beta-D-glucosyl residues with release of beta-D-glucose.. It participates in glycan metabolism; cellulose degradation. Beta-glucosidases are one of a number of cellulolytic enzymes involved in the degradation of cellulosic biomass. Catalyzes the last step releasing glucose from the inhibitory cellobiose. In Aspergillus fumigatus (strain ATCC MYA-4609 / CBS 101355 / FGSC A1100 / Af293) (Neosartorya fumigata), this protein is Probable beta-glucosidase F (bglF).